The primary structure comprises 694 residues: Zinc finger BED domain-containing protein 5 (694 aa).

The BED-type zinc finger occupies 109-165 (RKYDESYLSFGFTYFGNRDAPHAQCVLCKKILSNSSLAPSKLRRHLETKHAAYKDKD). Cys133, Cys136, His153, and His158 together coordinate Zn(2+).

In Bos taurus (Bovine), this protein is Zinc finger BED domain-containing protein 5 (ZBED5).